The sequence spans 686 residues: Aminodeoxychorismate synthase (686 aa).

The region spanning 2–194 (RTLLIDNYDS…RDLALAHHRA (193 aa)) is the Glutamine amidotransferase type-1 domain. Cys81 serves as the catalytic Nucleophile. Residues His168 and Glu170 contribute to the active site. Residues 233–686 (LDSSSVLEGA…LDGSAVAGAR (454 aa)) form a PABB component region.

This sequence in the C-terminal section; belongs to the anthranilate synthase component I family.

It catalyses the reaction chorismate + L-glutamine = 4-amino-4-deoxychorismate + L-glutamate. It functions in the pathway antibiotic biosynthesis. Involved in chloramphenicol biosynthesis. Catalyzes the biosynthesis of 4-amino-4-deoxychorismate (ADC) from chorismate and glutamine. This Streptomyces venezuelae (strain ATCC 10712 / CBS 650.69 / DSM 40230 / JCM 4526 / NBRC 13096 / PD 04745) protein is Aminodeoxychorismate synthase.